Here is a 509-residue protein sequence, read N- to C-terminus: Putative aldehyde dehydrogenase family 7 member A1 homolog (509 aa).

244–249 (GSTEVG) provides a ligand contact to NAD(+). Residue E266 is the Proton acceptor of the active site. Catalysis depends on C300, which acts as the Nucleophile.

Belongs to the aldehyde dehydrogenase family. In terms of assembly, homotetramer.

The catalysed reaction is an aldehyde + NAD(+) + H2O = a carboxylate + NADH + 2 H(+). The protein is Putative aldehyde dehydrogenase family 7 member A1 homolog of Dictyostelium discoideum (Social amoeba).